The following is a 797-amino-acid chain: Outer membrane protein assembly factor BamA (797 aa).

Residues 1–19 form the signal peptide; that stretch reads MKKLLIASLLFGTTTTVFA. POTRA domains follow at residues 22-89, 90-170, 173-259, 262-341, and 344-418; these read FVAK…VVAK, SIIS…INED, AKLA…VNEG, YDLR…VDAG, and LTVR…VKER.

This sequence belongs to the BamA family. Part of the Bam complex.

The protein localises to the cell outer membrane. Part of the outer membrane protein assembly complex, which is involved in assembly and insertion of beta-barrel proteins into the outer membrane. The polypeptide is Outer membrane protein assembly factor BamA (Haemophilus influenzae).